A 231-amino-acid polypeptide reads, in one-letter code: Regulatory factor X-associated protein (231 aa).

Residues 1-163 (MEAQAVPEGS…GNVKLEESTD (163 aa)) form a disordered region. A compositionally biased stretch (acidic residues) spans 50 to 65 (ADAEDEAGDDDADLLD). The span at 115–138 (KQRKPWMCKKHRNKMYKDKYKKKK) shows a compositional bias: basic residues. Residues 123 to 138 (KKHRNKMYKDKYKKKK) carry the Nuclear localization signal motif. Residue lysine 157 forms a Glycyl lysine isopeptide (Lys-Gly) (interchain with G-Cter in SUMO2) linkage.

In terms of assembly, RFX consists of at least 3 different subunits; RFXAP, RFX5 and RFX-B/RFXANK; with each subunit representing a separate complementation group. RFX forms cooperative DNA binding complexes with X2BP and CBF/NF-Y. RFX associates with CIITA to form an active transcriptional complex. Post-translationally, phosphorylated.

The protein resides in the nucleus. Its function is as follows. Part of the RFX complex that binds to the X-box of MHC II promoters. This Mus musculus (Mouse) protein is Regulatory factor X-associated protein (Rfxap).